A 304-amino-acid polypeptide reads, in one-letter code: MLLCAVISFIVYAVFLQEANGHAAERADSRKPIWDIAHMVNDLELVDEYLGDGANGLELDVAFTDDGTADKMYHGVPCDCFRSCKRTEGFTKYMDYIRQLTTPGNSKFKSQLILLIMDLKLNGIEPNVAYAAGKSVAEKLLSGYWQNGKSGARAYIVLSLETITRPDFISGFRDAIKASGHEELFEKIGWDFSGNEDLGEIRRVYQKYGIEDHIWQGDGITNCLPRGDYRLTEAMKKKNDPNYKYTLKVYTWSIDKESSIRNALRLGVDAVMTNYPARVKSILRESEFSGTHRMATYDDNPWQK.

An N-terminal signal peptide occupies residues 1 to 21 (MLLCAVISFIVYAVFLQEANG). Positions 22-26 (HAAER) are excised as a propeptide. Residue His-38 is part of the active site. Mg(2+) contacts are provided by Glu-58 and Asp-60. Catalysis depends on His-74, which acts as the Nucleophile. Disulfide bonds link Cys-78–Cys-84 and Cys-80–Cys-223. Asp-118 lines the Mg(2+) pocket.

This sequence belongs to the arthropod phospholipase D family. Class II subfamily. Mg(2+) is required as a cofactor. As to expression, expressed by the venom gland.

The protein localises to the secreted. The enzyme catalyses an N-(acyl)-sphingosylphosphocholine = an N-(acyl)-sphingosyl-1,3-cyclic phosphate + choline. It catalyses the reaction an N-(acyl)-sphingosylphosphoethanolamine = an N-(acyl)-sphingosyl-1,3-cyclic phosphate + ethanolamine. The catalysed reaction is a 1-acyl-sn-glycero-3-phosphocholine = a 1-acyl-sn-glycero-2,3-cyclic phosphate + choline. It carries out the reaction a 1-acyl-sn-glycero-3-phosphoethanolamine = a 1-acyl-sn-glycero-2,3-cyclic phosphate + ethanolamine. Functionally, dermonecrotic toxins cleave the phosphodiester linkage between the phosphate and headgroup of certain phospholipids (sphingolipid and lysolipid substrates), forming an alcohol (often choline) and a cyclic phosphate. This toxin acts on sphingomyelin (SM) with low activity. It may also act on ceramide phosphoethanolamine (CPE), lysophosphatidylcholine (LPC) and lysophosphatidylethanolamine (LPE), but not on lysophosphatidylserine (LPS), and lysophosphatidylglycerol (LPG). It acts by transphosphatidylation, releasing exclusively cyclic phosphate products as second products. Induces dermonecrosis, hemolysis, increased vascular permeability, edema, inflammatory response, and platelet aggregation. This Loxosceles intermedia (Brown spider) protein is Dermonecrotic toxin LiSicTox-betaIA1ii.